The following is a 284-amino-acid chain: Signal peptidase I (284 aa).

Residues 4 to 22 (NFPLLLVIAVAVCGALALV) traverse the membrane as a helical segment. Topologically, residues 23–58 (DLVLFAPRRRAAISSYEGQVNEPDPAVLEKLNKEPL) are cytoplasmic. A helical transmembrane segment spans residues 59–77 (LVEYGKSFFPVLFIVLVLR). The Periplasmic segment spans residues 78-284 (SFLVEPFQIP…PNFSRVGVIH (207 aa)). Residues Ser-90 and Lys-145 contribute to the active site.

It belongs to the peptidase S26 family.

The protein localises to the cell inner membrane. It catalyses the reaction Cleavage of hydrophobic, N-terminal signal or leader sequences from secreted and periplasmic proteins.. This chain is Signal peptidase I (lepB), found in Pseudomonas aeruginosa (strain ATCC 15692 / DSM 22644 / CIP 104116 / JCM 14847 / LMG 12228 / 1C / PRS 101 / PAO1).